We begin with the raw amino-acid sequence, 509 residues long: Maturase K (509 aa).

Belongs to the intron maturase 2 family. MatK subfamily.

It is found in the plastid. The protein localises to the chloroplast. Its function is as follows. Usually encoded in the trnK tRNA gene intron. Probably assists in splicing its own and other chloroplast group II introns. The chain is Maturase K from Schlumbergera truncata (Thanksgiving cactus).